Reading from the N-terminus, the 127-residue chain is Fluoride-specific ion channel FluC (127 aa).

The next 4 helical transmembrane spans lie at 2–22, 35–55, 68–88, and 104–124; these read LSSL…RWAI, LGTL…IAIF, LITT…LEVV, and LLNL…VVWI. 2 residues coordinate Na(+): Gly-75 and Thr-78.

This sequence belongs to the fluoride channel Fluc/FEX (TC 1.A.43) family.

The protein localises to the cell inner membrane. The enzyme catalyses fluoride(in) = fluoride(out). With respect to regulation, na(+) is not transported, but it plays an essential structural role and its presence is essential for fluoride channel function. Its function is as follows. Fluoride-specific ion channel. Important for reducing fluoride concentration in the cell, thus reducing its toxicity. This chain is Fluoride-specific ion channel FluC, found in Serratia proteamaculans (strain 568).